The chain runs to 342 residues: Holliday junction branch migration complex subunit RuvB (342 aa).

Positions 1–179 are large ATPase domain (RuvB-L); sequence MTNILSPEKS…FGIPMRLNFY (179 aa). ATP is bound by residues I18, R19, G60, K63, T64, T65, 126–128, R169, Y179, and R216; that span reads EDF. Residue T64 coordinates Mg(2+). The interval 180–250 is small ATPAse domain (RuvB-S); that stretch reads NTEELKKVLN…VSDFGLNRLE (71 aa). The head domain (RuvB-H) stretch occupies residues 253–342; that stretch reads RIGLDSNDYR…HQFNIFNENE (90 aa). 3 residues coordinate DNA: R289, R308, and R313.

It belongs to the RuvB family. In terms of assembly, homohexamer. Forms an RuvA(8)-RuvB(12)-Holliday junction (HJ) complex. HJ DNA is sandwiched between 2 RuvA tetramers; dsDNA enters through RuvA and exits via RuvB. An RuvB hexamer assembles on each DNA strand where it exits the tetramer. Each RuvB hexamer is contacted by two RuvA subunits (via domain III) on 2 adjacent RuvB subunits; this complex drives branch migration. In the full resolvosome a probable DNA-RuvA(4)-RuvB(12)-RuvC(2) complex forms which resolves the HJ.

Its subcellular location is the cytoplasm. It catalyses the reaction ATP + H2O = ADP + phosphate + H(+). Functionally, the RuvA-RuvB-RuvC complex processes Holliday junction (HJ) DNA during genetic recombination and DNA repair, while the RuvA-RuvB complex plays an important role in the rescue of blocked DNA replication forks via replication fork reversal (RFR). RuvA specifically binds to HJ cruciform DNA, conferring on it an open structure. The RuvB hexamer acts as an ATP-dependent pump, pulling dsDNA into and through the RuvAB complex. RuvB forms 2 homohexamers on either side of HJ DNA bound by 1 or 2 RuvA tetramers; 4 subunits per hexamer contact DNA at a time. Coordinated motions by a converter formed by DNA-disengaged RuvB subunits stimulates ATP hydrolysis and nucleotide exchange. Immobilization of the converter enables RuvB to convert the ATP-contained energy into a lever motion, pulling 2 nucleotides of DNA out of the RuvA tetramer per ATP hydrolyzed, thus driving DNA branch migration. The RuvB motors rotate together with the DNA substrate, which together with the progressing nucleotide cycle form the mechanistic basis for DNA recombination by continuous HJ branch migration. Branch migration allows RuvC to scan DNA until it finds its consensus sequence, where it cleaves and resolves cruciform DNA. The polypeptide is Holliday junction branch migration complex subunit RuvB (Rickettsia rickettsii (strain Sheila Smith)).